The following is a 180-amino-acid chain: Shikimate kinase (180 aa).

14 to 19 (GAGKSS) serves as a coordination point for ATP. Ser18 provides a ligand contact to Mg(2+). 3 residues coordinate substrate: Asp36, Arg60, and Gly82. An ATP-binding site is contributed by Arg120. Arg139 is a substrate binding site.

The protein belongs to the shikimate kinase family. Monomer. It depends on Mg(2+) as a cofactor.

The protein resides in the cytoplasm. The catalysed reaction is shikimate + ATP = 3-phosphoshikimate + ADP + H(+). The protein operates within metabolic intermediate biosynthesis; chorismate biosynthesis; chorismate from D-erythrose 4-phosphate and phosphoenolpyruvate: step 5/7. Catalyzes the specific phosphorylation of the 3-hydroxyl group of shikimic acid using ATP as a cosubstrate. This chain is Shikimate kinase, found in Xylella fastidiosa (strain M12).